Consider the following 121-residue polypeptide: Phosphoribosyl-ATP pyrophosphatase (121 aa).

The protein belongs to the PRA-PH family.

The protein resides in the cytoplasm. The catalysed reaction is 1-(5-phospho-beta-D-ribosyl)-ATP + H2O = 1-(5-phospho-beta-D-ribosyl)-5'-AMP + diphosphate + H(+). It participates in amino-acid biosynthesis; L-histidine biosynthesis; L-histidine from 5-phospho-alpha-D-ribose 1-diphosphate: step 2/9. In Burkholderia cenocepacia (strain ATCC BAA-245 / DSM 16553 / LMG 16656 / NCTC 13227 / J2315 / CF5610) (Burkholderia cepacia (strain J2315)), this protein is Phosphoribosyl-ATP pyrophosphatase.